Reading from the N-terminus, the 172-residue chain is Cytochrome b6-f complex iron-sulfur subunit (172 aa).

A helical transmembrane segment spans residues 19-39 (LNALLSGSVGVVVVGALYPVV). The Rieske domain occupies 61–161 (GKPISVSELL…ATVDGDNVRF (101 aa)). 4 residues coordinate [2Fe-2S] cluster: Cys-107, His-109, Cys-125, and His-128. Cys-112 and Cys-127 are oxidised to a cystine.

It belongs to the Rieske iron-sulfur protein family. As to quaternary structure, the 4 large subunits of the cytochrome b6-f complex are cytochrome b6, subunit IV (17 kDa polypeptide, PetD), cytochrome f and the Rieske protein, while the 4 small subunits are PetG, PetL, PetM and PetN. The complex functions as a dimer. [2Fe-2S] cluster serves as cofactor.

It is found in the cellular thylakoid membrane. The catalysed reaction is 2 oxidized [plastocyanin] + a plastoquinol + 2 H(+)(in) = 2 reduced [plastocyanin] + a plastoquinone + 4 H(+)(out). In terms of biological role, component of the cytochrome b6-f complex, which mediates electron transfer between photosystem II (PSII) and photosystem I (PSI), cyclic electron flow around PSI, and state transitions. This chain is Cytochrome b6-f complex iron-sulfur subunit, found in Synechococcus sp. (strain JA-2-3B'a(2-13)) (Cyanobacteria bacterium Yellowstone B-Prime).